A 286-amino-acid chain; its full sequence is ATP synthase gamma chain (286 aa).

This sequence belongs to the ATPase gamma chain family. In terms of assembly, F-type ATPases have 2 components, CF(1) - the catalytic core - and CF(0) - the membrane proton channel. CF(1) has five subunits: alpha(3), beta(3), gamma(1), delta(1), epsilon(1). CF(0) has three main subunits: a, b and c.

The protein localises to the cell inner membrane. Functionally, produces ATP from ADP in the presence of a proton gradient across the membrane. The gamma chain is believed to be important in regulating ATPase activity and the flow of protons through the CF(0) complex. This Pseudoalteromonas translucida (strain TAC 125) protein is ATP synthase gamma chain.